Consider the following 121-residue polypeptide: UPF0102 protein Dhaf_3740 (121 aa).

It belongs to the UPF0102 family.

This is UPF0102 protein Dhaf_3740 from Desulfitobacterium hafniense (strain DSM 10664 / DCB-2).